Reading from the N-terminus, the 211-residue chain is FMN-dependent NADH:quinone oxidoreductase (211 aa).

FMN-binding positions include S10 and 16 to 18; that span reads STS.

The protein belongs to the azoreductase type 1 family. As to quaternary structure, homodimer. FMN is required as a cofactor.

The catalysed reaction is 2 a quinone + NADH + H(+) = 2 a 1,4-benzosemiquinone + NAD(+). It carries out the reaction N,N-dimethyl-1,4-phenylenediamine + anthranilate + 2 NAD(+) = 2-(4-dimethylaminophenyl)diazenylbenzoate + 2 NADH + 2 H(+). In terms of biological role, quinone reductase that provides resistance to thiol-specific stress caused by electrophilic quinones. Also exhibits azoreductase activity. Catalyzes the reductive cleavage of the azo bond in aromatic azo compounds to the corresponding amines. The chain is FMN-dependent NADH:quinone oxidoreductase from Frankia casuarinae (strain DSM 45818 / CECT 9043 / HFP020203 / CcI3).